We begin with the raw amino-acid sequence, 1461 residues long: Gag-Pro-Pol polyprotein (1461 aa).

The N-myristoyl glycine; by host moiety is linked to residue glycine 2. The PTAP/PSAP motif motif lies at proline 94–proline 97. The segment at proline 94–alanine 121 is disordered. A compositionally biased stretch (pro residues) spans proline 97–alanine 121. Positions proline 124–tyrosine 127 match the PPXY motif motif. The PTAP/PSAP motif signature appears at proline 130–threonine 133. CCHC-type zinc fingers lie at residues glutamine 361–glutamine 378 and glycine 384–glutamine 401. A disordered region spans residues cysteine 399 to glutamate 425. The 79-residue stretch at threonine 473–alanine 551 folds into the Peptidase A2 domain. Aspartate 478 functions as the For protease activity; shared with dimeric partner in the catalytic mechanism. The Reverse transcriptase domain maps to leucine 612–isoleucine 802. Positions 678, 753, 754, 1038, 1073, 1095, 1156, 1229, and 1286 each coordinate Mg(2+). The RNase H type-1 domain occupies leucine 1029–valine 1164. The region spanning arginine 1218–proline 1387 is the Integrase catalytic domain. Residues lysine 1392–cysteine 1441 constitute a DNA-binding region (integrase-type).

In terms of assembly, homodimer; the homodimers are part of the immature particles. Interacts with human TSG101 and NEDD4; these interactions are essential for budding and release of viral particles. Homodimer; further assembles as homohexamers. Requires Mg(2+) as cofactor. Post-translationally, phosphorylation of the matrix protein p19 by MAPK1 seems to play a role in budding. In terms of processing, myristoylated. Myristoylation of the matrix (MA) domain mediates the transport and binding of Gag polyproteins to the host plasma membrane and is required for the assembly of viral particles. Specific enzymatic cleavages by the viral protease yield mature proteins. The polyprotein is cleaved during and after budding, this process is termed maturation. The protease is autoproteolytically processed at its N- and C-termini.

The protein localises to the virion. It catalyses the reaction Endonucleolytic cleavage to 5'-phosphomonoester.. The enzyme catalyses DNA(n) + a 2'-deoxyribonucleoside 5'-triphosphate = DNA(n+1) + diphosphate. The matrix domain targets Gag, Gag-Pro and Gag-Pro-Pol polyproteins to the plasma membrane via a multipartite membrane binding signal, that includes its myristoylated N-terminus. Its function is as follows. Matrix protein. In terms of biological role, forms the spherical core of the virus that encapsulates the genomic RNA-nucleocapsid complex. Functionally, binds strongly to viral nucleic acids and promote their aggregation. Also destabilizes the nucleic acids duplexes via highly structured zinc-binding motifs. The aspartyl protease mediates proteolytic cleavages of Gag and Gag-Pol polyproteins during or shortly after the release of the virion from the plasma membrane. Cleavages take place as an ordered, step-wise cascade to yield mature proteins. This process is called maturation. Displays maximal activity during the budding process just prior to particle release from the cell (Potential). Cleaves the translation initiation factor eIF4G leading to the inhibition of host cap-dependent translation. Its function is as follows. RT is a multifunctional enzyme that converts the viral RNA genome into dsDNA in the cytoplasm, shortly after virus entry into the cell. This enzyme displays a DNA polymerase activity that can copy either DNA or RNA templates, and a ribonuclease H (RNase H) activity that cleaves the RNA strand of RNA-DNA heteroduplexes in a partially processive 3' to 5'-endonucleasic mode. Conversion of viral genomic RNA into dsDNA requires many steps. A tRNA-Pro binds to the primer-binding site (PBS) situated at the 5'-end of the viral RNA. RT uses the 3' end of the tRNA primer to perform a short round of RNA-dependent minus-strand DNA synthesis. The reading proceeds through the U5 region and ends after the repeated (R) region which is present at both ends of viral RNA. The portion of the RNA-DNA heteroduplex is digested by the RNase H, resulting in a ssDNA product attached to the tRNA primer. This ssDNA/tRNA hybridizes with the identical R region situated at the 3' end of viral RNA. This template exchange, known as minus-strand DNA strong stop transfer, can be either intra- or intermolecular. RT uses the 3' end of this newly synthesized short ssDNA to perform the RNA-dependent minus-strand DNA synthesis of the whole template. RNase H digests the RNA template except for a polypurine tract (PPT) situated at the 5' end of the genome. It is not clear if both polymerase and RNase H activities are simultaneous. RNase H probably can proceed both in a polymerase-dependent (RNA cut into small fragments by the same RT performing DNA synthesis) and a polymerase-independent mode (cleavage of remaining RNA fragments by free RTs). Secondly, RT performs DNA-directed plus-strand DNA synthesis using the PPT that has not been removed by RNase H as primer. PPT and tRNA primers are then removed by RNase H. The 3' and 5' ssDNA PBS regions hybridize to form a circular dsDNA intermediate. Strand displacement synthesis by RT to the PBS and PPT ends produces a blunt ended, linear dsDNA copy of the viral genome that includes long terminal repeats (LTRs) at both ends. In terms of biological role, catalyzes viral DNA integration into the host chromosome, by performing a series of DNA cutting and joining reactions. The sequence is that of Gag-Pro-Pol polyprotein (gag-pro-pol) from Human T-cell leukemia virus 2 (HTLV-2).